Here is a 144-residue protein sequence, read N- to C-terminus: Large ribosomal subunit protein uL15 (144 aa).

The interval 1–44 (MKLNELMPSEGSRTNRKRIGRGTSSGTGKTAGRGQKGQKARGKV) is disordered. Residues 23–35 (TSSGTGKTAGRGQ) show a composition bias toward gly residues.

Belongs to the universal ribosomal protein uL15 family. In terms of assembly, part of the 50S ribosomal subunit.

Its function is as follows. Binds to the 23S rRNA. This chain is Large ribosomal subunit protein uL15, found in Pediococcus pentosaceus (strain ATCC 25745 / CCUG 21536 / LMG 10740 / 183-1w).